The chain runs to 376 residues: Carbohydrate sulfotransferase 14 (376 aa).

Residues 1–39 are Cytoplasmic-facing; it reads MFPRPLTPLAAPNGAEPLGRALRRAPLGRARAGLGGPPL. A helical; Signal-anchor for type II membrane protein membrane pass occupies residues 40–60; the sequence is LLPSMLMFAVIVASSGLLLMI. The Lumenal portion of the chain corresponds to 61–376; the sequence is ERGILAEMKP…PNVTKEACQQ (316 aa). Asn-110 is a glycosylation site (N-linked (GlcNAc...) asparagine). Residues 155–161 and 213–221 contribute to the 3'-phosphoadenylyl sulfate site; these read PKVACSN and REPLERLLS. Residue Asn-368 is glycosylated (N-linked (GlcNAc...) asparagine).

This sequence belongs to the sulfotransferase 2 family. Widely expressed. Expressed at high level in pituitary gland, placenta, uterus and thyroid.

Its subcellular location is the golgi apparatus membrane. The enzyme catalyses dermatan + n 3'-phosphoadenylyl sulfate = dermatan 4'-sulfate + n adenosine 3',5'-bisphosphate + n H(+). In terms of biological role, catalyzes the transfer of sulfate to position 4 of the N-acetylgalactosamine (GalNAc) residue of dermatan sulfate. Plays a pivotal role in the formation of 4-0-sulfated IdoA blocks in dermatan sulfate. Transfers sulfate to the C-4 hydroxyl of beta1,4-linked GalNAc that is substituted with an alpha-linked iduronic acid (IdoUA) at the C-3 hydroxyl. Transfers sulfate more efficiently to GalNAc residues in -IdoUA-GalNAc-IdoUA- than in -GlcUA-GalNAc-GlcUA-sequences. Has preference for partially desulfated dermatan sulfate. Addition of sulfate to GalNAc may occur immediately after epimerization of GlcUA to IdoUA. Appears to have an important role in the formation of the cerebellar neural network during postnatal brain development. This is Carbohydrate sulfotransferase 14 (CHST14) from Homo sapiens (Human).